The chain runs to 703 residues: Polyribonucleotide nucleotidyltransferase (703 aa).

Positions 487 and 493 each coordinate Mg(2+). The region spanning 554-613 (PKMETIKIDPDKIRDVIGKGGATIRSICEDTGASIDIDDNGTVRIYAESKLAADEAIYRI) is the KH domain. Residues 623–691 (GKLYRGKVER…ARGRIKLSMK (69 aa)) enclose the S1 motif domain.

It belongs to the polyribonucleotide nucleotidyltransferase family. As to quaternary structure, component of the RNA degradosome, which is a multiprotein complex involved in RNA processing and mRNA degradation. The cofactor is Mg(2+).

The protein localises to the cytoplasm. The enzyme catalyses RNA(n+1) + phosphate = RNA(n) + a ribonucleoside 5'-diphosphate. Involved in mRNA degradation. Catalyzes the phosphorolysis of single-stranded polyribonucleotides processively in the 3'- to 5'-direction. The polypeptide is Polyribonucleotide nucleotidyltransferase (Hahella chejuensis (strain KCTC 2396)).